The primary structure comprises 736 residues: 1,4-alpha-glucan branching enzyme GlgB (736 aa).

Asp417 (nucleophile) is an active-site residue. Glu470 functions as the Proton donor in the catalytic mechanism.

Belongs to the glycosyl hydrolase 13 family. GlgB subfamily. In terms of assembly, monomer.

The enzyme catalyses Transfers a segment of a (1-&gt;4)-alpha-D-glucan chain to a primary hydroxy group in a similar glucan chain.. Its pathway is glycan biosynthesis; glycogen biosynthesis. Functionally, catalyzes the formation of the alpha-1,6-glucosidic linkages in glycogen by scission of a 1,4-alpha-linked oligosaccharide from growing alpha-1,4-glucan chains and the subsequent attachment of the oligosaccharide to the alpha-1,6 position. In Pseudomonas putida (strain ATCC 47054 / DSM 6125 / CFBP 8728 / NCIMB 11950 / KT2440), this protein is 1,4-alpha-glucan branching enzyme GlgB.